The chain runs to 365 residues: Homeobox protein Nkx-6.1 (365 aa).

The segment at 35-136 (LYPAAYPPLP…SSSSASATSA (102 aa)) is disordered. 3 stretches are compositionally biased toward low complexity: residues 48-59 (PSSSSSSSSSSS), 69-92 (PGGL…QLSA), and 110-136 (ASGA…ATSA). A repressor domain region spans residues 102–269 (LSRPSMPVAS…KYLAGPERAR (168 aa)). Arg-190 carries the asymmetric dimethylarginine modification. A DNA-binding region (homeobox) is located at residues 237–296 (RKHTRPTFSGQQIFALEKTFEQTKYLAGPERARLAYSLGMTESQVKVWFQNRRTKWRKKH). The tract at residues 295–365 (KHAAEMATAK…LHASEAEGSS (71 aa)) is disordered. The span at 305–318 (KKQDSETERLKGTS) shows a compositional bias: basic and acidic residues. Positions 307–365 (QDSETERLKGTSENEEDDDDYNKPLDPNSDDEKITQLLKKHKSSGGSLLLHASEAEGSS) are involved in DNA-binding.

Pancreatic beta cells.

Its subcellular location is the nucleus. Its function is as follows. Transcription factor which binds to specific A/T-rich DNA sequences in the promoter regions of a number of genes. Involved in the development of insulin-producing beta cells in the islets of Langerhans at the secondary transition. Together with NKX2-2 and IRX3 acts to restrict the generation of motor neurons to the appropriate region of the neural tube. Belongs to the class II proteins of neuronal progenitor factors, which are induced by SHH signals. In Rattus norvegicus (Rat), this protein is Homeobox protein Nkx-6.1 (Nkx6-1).